A 394-amino-acid chain; its full sequence is Flavohemoprotein (394 aa).

Positions 1-136 (MISQQTIDIV…LANVFITREE (136 aa)) constitute a Globin domain. Position 85 (H85) interacts with heme b. Residues Y95 and E135 each act as charge relay system in the active site. Residues 147–394 (GGWRGTREFT…YECFGPHKVL (248 aa)) form a reductase region. An FAD-binding FR-type domain is found at 150–255 (RGTREFTLIE…AAPAGDFFLD (106 aa)). Residues Y188 and 204 to 207 (RQYS) each bind FAD. 268 to 273 (GVGLTP) is a binding site for NADP(+). Position 387 to 390 (387 to 390 (CFGP)) interacts with FAD.

The protein belongs to the globin family. Two-domain flavohemoproteins subfamily. It in the C-terminal section; belongs to the flavoprotein pyridine nucleotide cytochrome reductase family. Heme b serves as cofactor. It depends on FAD as a cofactor.

It catalyses the reaction 2 nitric oxide + NADPH + 2 O2 = 2 nitrate + NADP(+) + H(+). It carries out the reaction 2 nitric oxide + NADH + 2 O2 = 2 nitrate + NAD(+) + H(+). Its function is as follows. Is involved in NO detoxification in an aerobic process, termed nitric oxide dioxygenase (NOD) reaction that utilizes O(2) and NAD(P)H to convert NO to nitrate, which protects the bacterium from various noxious nitrogen compounds. Therefore, plays a central role in the inducible response to nitrosative stress. This is Flavohemoprotein from Photobacterium profundum (strain SS9).